Here is a 913-residue protein sequence, read N- to C-terminus: Protein SEY1 homolog (913 aa).

The Cytoplasmic portion of the chain corresponds to 1–825 (MTDVNKTQII…ETGGHMSLKN (825 aa)). Positions 33-288 (GFNYNVIAIL…IPADGFAQYC (256 aa)) constitute a GB1/RHD3-type G domain. A GTP-binding site is contributed by 43–50 (GSQSSGKS). A helical transmembrane segment spans residues 826 to 846 (VPFAFWVILLILGWNEILMFT). Residues 847–849 (RLF) lie on the Lumenal side of the membrane. Residues 850-870 (FRLNIILPMLIGFIIIVISCL) form a helical membrane-spanning segment. Topologically, residues 871–913 (YTGNAQILSYINKIIFIVIKNLYNFYKHLQTIGHQTTKPEKVE) are cytoplasmic.

Belongs to the TRAFAC class dynamin-like GTPase superfamily. GB1/RHD3 GTPase family. RHD3 subfamily.

The protein localises to the endoplasmic reticulum membrane. Its function is as follows. Probable GTP-binding protein involved in generating and maintaining the structure of the tubular endoplasmic reticulum network. This chain is Protein SEY1 homolog, found in Plasmodium berghei (strain Anka).